A 114-amino-acid polypeptide reads, in one-letter code: Iron-sulfur cluster insertion protein ErpA (114 aa).

Iron-sulfur cluster-binding residues include Cys-42, Cys-106, and Cys-108.

Belongs to the HesB/IscA family. Homodimer. Iron-sulfur cluster is required as a cofactor.

Functionally, required for insertion of 4Fe-4S clusters for at least IspG. This chain is Iron-sulfur cluster insertion protein ErpA, found in Klebsiella pneumoniae (strain 342).